Reading from the N-terminus, the 799-residue chain is Mitochondrial intermediate peptidase (799 aa).

H562 is a binding site for Zn(2+). The active site involves E563. The Zn(2+) site is built by H566 and H569.

It belongs to the peptidase M3 family. Requires Zn(2+) as cofactor.

It localises to the mitochondrion matrix. It carries out the reaction Release of an N-terminal octapeptide as second stage of processing of some proteins imported into the mitochondrion.. Its function is as follows. Cleaves proteins, imported into the mitochondrion, to their mature size. While most mitochondrial precursor proteins are processed to the mature form in one step by mitochondrial processing peptidase (MPP), the sequential cleavage by MIP of an octapeptide after initial processing by MPP is a required step for a subgroup of nuclear-encoded precursor proteins destined for the matrix or the inner membrane. The protein is Mitochondrial intermediate peptidase (oct1) of Aspergillus niger (strain ATCC MYA-4892 / CBS 513.88 / FGSC A1513).